The following is a 298-amino-acid chain: N-acetylmuramic acid 6-phosphate etherase (298 aa).

The SIS domain maps to 55–218 (IHTQVSGGGR…STGLMIKSGK (164 aa)). Glutamate 83 acts as the Proton donor in catalysis. Glutamate 114 is an active-site residue.

Belongs to the GCKR-like family. MurNAc-6-P etherase subfamily. As to quaternary structure, homodimer.

It catalyses the reaction N-acetyl-D-muramate 6-phosphate + H2O = N-acetyl-D-glucosamine 6-phosphate + (R)-lactate. Its pathway is amino-sugar metabolism; 1,6-anhydro-N-acetylmuramate degradation. It functions in the pathway amino-sugar metabolism; N-acetylmuramate degradation. The protein operates within cell wall biogenesis; peptidoglycan recycling. Its function is as follows. Specifically catalyzes the cleavage of the D-lactyl ether substituent of MurNAc 6-phosphate, producing GlcNAc 6-phosphate and D-lactate. Together with AnmK, is also required for the utilization of anhydro-N-acetylmuramic acid (anhMurNAc) either imported from the medium or derived from its own cell wall murein, and thus plays a role in cell wall recycling. In Escherichia coli O1:K1 / APEC, this protein is N-acetylmuramic acid 6-phosphate etherase.